Consider the following 201-residue polypeptide: Probable molybdenum cofactor guanylyltransferase (201 aa).

GTP is bound by residues 20 to 22 (LAG), lysine 32, aspartate 77, and aspartate 106. Aspartate 106 contributes to the Mg(2+) binding site.

It belongs to the MobA family. Mg(2+) is required as a cofactor.

Its subcellular location is the cytoplasm. The enzyme catalyses Mo-molybdopterin + GTP + H(+) = Mo-molybdopterin guanine dinucleotide + diphosphate. Transfers a GMP moiety from GTP to Mo-molybdopterin (Mo-MPT) cofactor (Moco or molybdenum cofactor) to form Mo-molybdopterin guanine dinucleotide (Mo-MGD) cofactor. The protein is Probable molybdenum cofactor guanylyltransferase of Aquifex aeolicus (strain VF5).